Reading from the N-terminus, the 231-residue chain is MMRIPNRSIQAANIFFSSGAILLLIAGLIMENWVELIPKVRKDKVTHSPWLGCCPPFWPEESLEAIRRMMMMSLNISIYLNLIIGLQFTYMISQNKCVHLLIGFLSFFTGCLLFYAIIVYHHKLNKGQYVYFVNYKTKWIVFTIYLTIALFLTCGIFSFIQCTNRCACMKFCVPHTESSSKAMTQNTIQVISLPPRSEMPRSIVHMHSDMPGKEGSISKPHLQSRRVTWAL.

Residues methionine 1–asparagine 13 are Cytoplasmic-facing. Residues isoleucine 14 to valine 34 traverse the membrane as a helical segment. Topologically, residues glutamate 35–methionine 71 are extracellular. The chain crosses the membrane as a helical span at residues methionine 72–isoleucine 92. Residues serine 93–histidine 99 lie on the Cytoplasmic side of the membrane. The chain crosses the membrane as a helical span at residues leucine 100–tyrosine 120. The Extracellular portion of the chain corresponds to histidine 121–tryptophan 139. The helical transmembrane segment at isoleucine 140–isoleucine 160 threads the bilayer. Topologically, residues glutamine 161–leucine 231 are cytoplasmic. The short motif at arginine 225–tryptophan 229 is the RVxF element.

In terms of assembly, interacts (via RVxF motif) with PPP1CC. In terms of tissue distribution, expressed in testis, specifically in spermatocytes and round spermatids.

The protein localises to the cytoplasmic vesicle. The protein resides in the secretory vesicle. It localises to the acrosome membrane. Functionally, probably inhibits protein phosphatase 1 (PP1) in sperm via binding to catalytic subunit PPP1CC. In Rattus norvegicus (Rat), this protein is Transmembrane protein 225 (Tmem225).